The following is an 840-amino-acid chain: Cytosolic carboxypeptidase 2 (840 aa).

One can recognise a Peptidase M14 domain in the interval 358–628 (YPYTYTDLQC…HVCDTLLDFC (271 aa)). Zn(2+)-binding residues include H424, E427, and H520. Catalysis depends on E592, which acts as the Proton donor/acceptor. A compositionally biased stretch (basic residues) spans 706–719 (MFKKKKKKSLQTRK). 2 disordered regions span residues 706-726 (MFKKKKKKSLQTRKQRNEQYQ) and 758-789 (ESSSFLPMRNENPRLNETNLNRRDKDTSLDPS).

Belongs to the peptidase M14 family. Interacts with RARRES1, KIF11 and MAPRE1. Requires Zn(2+) as cofactor.

It localises to the cytoplasm. The protein localises to the cytosol. It is found in the cytoskeleton. The protein resides in the microtubule organizing center. Its subcellular location is the centrosome. It localises to the centriole. The protein localises to the cilium basal body. It catalyses the reaction (L-glutamyl)(n+1)-gamma-L-glutamyl-L-glutamyl-[protein] + H2O = (L-glutamyl)(n)-gamma-L-glutamyl-L-glutamyl-[protein] + L-glutamate. Its activity is regulated as follows. Inhibited by RARRES1. Functionally, metallocarboxypeptidase that mediates deglutamylation of tubulin and non-tubulin target proteins. Catalyzes the removal of polyglutamate side chains present on the gamma-carboxyl group of glutamate residues within the C-terminal tail of tubulin protein. Specifically cleaves tubulin long-side-chains, while it is not able to remove the branching point glutamate. Also catalyzes the removal of polyglutamate residues from the carboxy-terminus of non-tubulin proteins such as MYLK. This Macaca fascicularis (Crab-eating macaque) protein is Cytosolic carboxypeptidase 2 (AGBL2).